Here is a 284-residue protein sequence, read N- to C-terminus: Efem/EfeO family lipoprotein (284 aa).

A signal peptide spans 1-17 (MKKLTTLLLASTLLIAA). Cys18 carries N-palmitoyl cysteine lipidation. The S-diacylglycerol cysteine moiety is linked to residue Cys18.

Belongs to the EfeM/EfeO family.

The protein resides in the cell membrane. In Staphylococcus aureus (strain NCTC 8325 / PS 47), this protein is Efem/EfeO family lipoprotein.